The following is a 555-amino-acid chain: Ribonuclease J2 (555 aa).

Zn(2+) contacts are provided by histidine 74, histidine 76, histidine 142, and aspartate 164. Residue 364 to 368 (HVSGH) coordinates substrate.

This sequence belongs to the metallo-beta-lactamase superfamily. RNA-metabolizing metallo-beta-lactamase-like family. Bacterial RNase J subfamily. Unclear whether it forms homodimers or belongs to a larger complex. According to probably does not form homodimers, while shows homodimer formation. Both reports show RNase J1 and J2 interaction, probably as a heterotetramer shows it is a component of a possible RNA degradosome complex composed of rny, rnjA, rnjB, pnp, pfkA and eno, while finds no evidence of an RNA degradosome complex. Zn(2+) serves as cofactor.

It localises to the cytoplasm. Endonucleolytically cleaves the 5'-leader sequence of certain mRNAs. Endonuclease digestion by the RNase J1/J2 complex occurs at a different site and in some cases more efficiently than J1 or J2 alone. The exonuclease activity of the J1/J2 complex is highly processive on substrates longer than 5 nucleotides, on shorter substrates is distributive. Plays a role in mRNA maturation and stability. Appears to have a limited effect on 16S rRNA maturation, despite its similarity to RNase J1. This subunit alone has very poor 5'-3' exonuclease activity. This chain is Ribonuclease J2, found in Bacillus subtilis (strain 168).